The sequence spans 730 residues: Exostosin-1a (730 aa).

At 1–6 the chain is on the cytoplasmic side; sequence MQAKKR. The chain crosses the membrane as a helical; Signal-anchor for type II membrane protein span at residues 7–27; it reads YLILFSAGVCLILLFYLQGPA. Over 28–730 the chain is Lumenal; that stretch reads SRRTPKRGDD…RKKYRDIERL (703 aa). Asn-314 carries an N-linked (GlcNAc...) asparagine glycan. The UDP-N-acetyl-alpha-D-glucosamine site is built by Arg-533, Asp-549, Glu-550, Asp-551, Glu-637, Asp-638, and Arg-685. A Mn(2+)-binding site is contributed by Asp-551. Cys-636 and Cys-688 are disulfide-bonded. Asp-638 is an active-site residue.

This sequence belongs to the glycosyltransferase 47 family. Mn(2+) serves as cofactor.

Its subcellular location is the endoplasmic reticulum membrane. The catalysed reaction is 3-O-{[(1-&gt;4)-beta-D-GlcA-(1-&gt;4)-alpha-D-GlcNAc](n)-(1-&gt;4)-beta-D-GlcA-(1-&gt;3)-beta-D-Gal-(1-&gt;3)-beta-D-Gal-(1-&gt;4)-beta-D-Xyl}-L-seryl-[protein] + UDP-N-acetyl-alpha-D-glucosamine = 3-O-{alpha-D-GlcNAc-[(1-&gt;4)-beta-D-GlcA-(1-&gt;4)-alpha-D-GlcNAc](n)-(1-&gt;4)-beta-D-GlcA-(1-&gt;3)-beta-D-Gal-(1-&gt;3)-beta-D-Gal-(1-&gt;4)-beta-D-Xyl}-L-seryl-[protein] + UDP + H(+). It catalyses the reaction 3-O-{alpha-D-GlcNAc-[(1-&gt;4)-beta-D-GlcA-(1-&gt;4)-alpha-D-GlcNAc](n)-(1-&gt;4)-beta-D-GlcA-(1-&gt;3)-beta-D-Gal-(1-&gt;3)-beta-D-Gal-(1-&gt;4)-beta-D-Xyl}-L-seryl-[protein] + UDP-alpha-D-glucuronate = 3-O-{[(1-&gt;4)-beta-D-GlcA-(1-&gt;4)-alpha-D-GlcNAc](n+1)-(1-&gt;4)-beta-D-GlcA-(1-&gt;3)-beta-D-Gal-(1-&gt;3)-beta-D-Gal-(1-&gt;4)-beta-D-Xyl}-L-seryl-[protein] + UDP + H(+). Its pathway is protein modification; protein glycosylation. In terms of biological role, glycosyltransferase required for the biosynthesis of heparan-sulfate. The sequence is that of Exostosin-1a (ext1a) from Danio rerio (Zebrafish).